Consider the following 480-residue polypeptide: Cytochrome b-c1 complex subunit 1, mitochondrial (480 aa).

The N-terminal 34 residues, 1-34, are a transit peptide targeting the mitochondrion; that stretch reads MAASAVCRAACSGTQALLRTCRSPALLRLPALRG. An N6-acetyllysine mark is found at K111 and K138. K163 is modified (N6-acetyllysine; alternate). K163 is modified (N6-succinyllysine; alternate). S212 carries the phosphoserine modification. The residue at position 214 (T214) is a Phosphothreonine.

This sequence belongs to the peptidase M16 family. UQCRC1/QCR1 subfamily. In terms of assembly, component of the ubiquinol-cytochrome c oxidoreductase (cytochrome b-c1 complex, complex III, CIII), a multisubunit enzyme composed of 11 subunits. The complex is composed of 3 respiratory subunits cytochrome b, cytochrome c1 and Rieske protein UQCRFS1, 2 core protein subunits UQCRC1/QCR1 and UQCRC2/QCR2, and 6 low-molecular weight protein subunits UQCRH/QCR6, UQCRB/QCR7, UQCRQ/QCR8, UQCR10/QCR9, UQCR11/QCR10 and subunit 9, the cleavage product of Rieske protein UQCRFS1. The complex exists as an obligatory dimer and forms supercomplexes (SCs) in the inner mitochondrial membrane with NADH-ubiquinone oxidoreductase (complex I, CI) and cytochrome c oxidase (complex IV, CIV), resulting in different assemblies (supercomplex SCI(1)III(2)IV(1) and megacomplex MCI(2)III(2)IV(2)). Interacts with UQCC6. Interacts with STMP1.

The protein resides in the mitochondrion inner membrane. Functionally, component of the ubiquinol-cytochrome c oxidoreductase, a multisubunit transmembrane complex that is part of the mitochondrial electron transport chain which drives oxidative phosphorylation. The respiratory chain contains 3 multisubunit complexes succinate dehydrogenase (complex II, CII), ubiquinol-cytochrome c oxidoreductase (cytochrome b-c1 complex, complex III, CIII) and cytochrome c oxidase (complex IV, CIV), that cooperate to transfer electrons derived from NADH and succinate to molecular oxygen, creating an electrochemical gradient over the inner membrane that drives transmembrane transport and the ATP synthase. The cytochrome b-c1 complex catalyzes electron transfer from ubiquinol to cytochrome c, linking this redox reaction to translocation of protons across the mitochondrial inner membrane, with protons being carried across the membrane as hydrogens on the quinol. In the process called Q cycle, 2 protons are consumed from the matrix, 4 protons are released into the intermembrane space and 2 electrons are passed to cytochrome c. The 2 core subunits UQCRC1/QCR1 and UQCRC2/QCR2 are homologous to the 2 mitochondrial-processing peptidase (MPP) subunits beta-MPP and alpha-MPP respectively, and they seem to have preserved their MPP processing properties. May be involved in the in situ processing of UQCRFS1 into the mature Rieske protein and its mitochondrial targeting sequence (MTS)/subunit 9 when incorporated into complex III. Seems to play an important role in the maintenance of proper mitochondrial function in nigral dopaminergic neurons. In Rattus norvegicus (Rat), this protein is Cytochrome b-c1 complex subunit 1, mitochondrial (Uqcrc1).